The primary structure comprises 915 residues: MKVDPSEFELEFFEEIGFERKRCPECGEYFWGPPEAEVCNETPCVEYSFIGDPPASVKLDVWEAGEEFFRFFERHDHEVLDRYPVVARWRDDIHLTIASIACFQPWVTSGEVPPPANPLVINQPCIRLNDIDNVGRTGRHFTLFHMGGHHAFNNHPHDRRDIYWKEETVRLCYEFTVEKLGIPEEKIAFKESWWEGGGNAGPCFEVVVDGLELATLVFMQYEQVGGEYRELPQKIVDTGYGIERYAWITTGEPTAYDAVFGDLVDATARDLGVEIDGEAREILGELARVAGLMDVETESDLRVLRNRVARRLDLDVNELVRVAEPVEFVYGILDHARCLAFMLGDGVVPSNAGEGYLARLVIRRALRLLDGLDAEREYLLEVVERVLEDLRGTYPELAEREEYIQDALECEIDRYTRALKRGKKEVRKRLEEKGELSFEDLVELYDSHGIPPEVAREIAEDEGVEVEVPDDFYSRVAERHEGPEEVEEGLEELERIAVEEELPETELAFYDDEKRLEFKAEVIGTYEVNGDAWVVLDRTYFYPEGGGQEADRGTMRWKDGEAEVKDVQKVRGVVFHRIDGDVPPEGAEVECEVDGERRMRLTRNHTATHVILEAARRVLGDHVWQAGAHKSTDEARLDVTHHRRISDEELREIERLANEIVMKDLPVNKRFMDRNEAERRYGFELYQGGVVPGREIRVVEIEGWNVQACAGTHCDSTGEIGPIKIVGRERIQDGVERIRFAAGEAALERIWETEDLLRETCEVLRVNPENLPKTVKRFFEEWKEQRKRIERLERELVEAKLRAAPAEGRRVGDFTVTLVELEDVEVGSVAGTVEELVKEHENLVLVAKIVSNGSCQVVVGSGESAPPAGELMREIGKLIEGGGGGDERLAQGGGRNPDGLTEDRLVEIVEDLAGG.

4 residues coordinate Zn(2+): His605, His609, Cys709, and His713. Positions 882-901 (GGGGDERLAQGGGRNPDGLT) are disordered.

This sequence belongs to the class-II aminoacyl-tRNA synthetase family. Zn(2+) serves as cofactor.

The protein localises to the cytoplasm. The enzyme catalyses tRNA(Ala) + L-alanine + ATP = L-alanyl-tRNA(Ala) + AMP + diphosphate. Catalyzes the attachment of alanine to tRNA(Ala) in a two-step reaction: alanine is first activated by ATP to form Ala-AMP and then transferred to the acceptor end of tRNA(Ala). Also edits incorrectly charged Ser-tRNA(Ala) and Gly-tRNA(Ala) via its editing domain. The sequence is that of Alanine--tRNA ligase from Methanopyrus kandleri (strain AV19 / DSM 6324 / JCM 9639 / NBRC 100938).